Reading from the N-terminus, the 806-residue chain is WEB family protein At3g02930, chloroplastic (806 aa).

The transit peptide at 1–78 directs the protein to the chloroplast; that stretch reads MASKIKNGLS…PTPPEKTQIR (78 aa). 2 disordered regions span residues 1–94 and 380–403; these read MASK…QIKE and KSEQ…EKLK. Residues 9–22 show a composition bias toward low complexity; that stretch reads LSDTTLRKSSSTSL. Residues 34–59 are compositionally biased toward polar residues; sequence PDSNSPSPTQQQSRLSFERPSSNSKP. Coiled coils occupy residues 88–530, 585–662, and 698–757; these read QSVQ…FESA, DCLK…IEEN, and ETLD…EDLN. The segment covering 391–403 has biased composition (basic and acidic residues); that stretch reads ESSKSEKEAEKLK. Disordered stretches follow at residues 684–725 and 746–777; these read ENGY…EDET and KESA…EDEL. 2 stretches are compositionally biased toward basic and acidic residues: residues 685-699 and 706-725; these read NGYR…KVET and KLEE…EDET. The span at 759–769 shows a compositional bias: polar residues; it reads VDQSQKTSPVN.

Belongs to the WEB family.

It is found in the plastid. The protein resides in the chloroplast. The protein is WEB family protein At3g02930, chloroplastic of Arabidopsis thaliana (Mouse-ear cress).